A 233-amino-acid polypeptide reads, in one-letter code: Ribosomal RNA small subunit methyltransferase G (233 aa).

Residues glycine 91, methionine 96, valine 142–glutamate 143, and arginine 157 each bind S-adenosyl-L-methionine.

This sequence belongs to the methyltransferase superfamily. RNA methyltransferase RsmG family.

It localises to the cytoplasm. It catalyses the reaction guanosine(527) in 16S rRNA + S-adenosyl-L-methionine = N(7)-methylguanosine(527) in 16S rRNA + S-adenosyl-L-homocysteine. In terms of biological role, specifically methylates the N7 position of guanine in position 527 of 16S rRNA. This chain is Ribosomal RNA small subunit methyltransferase G, found in Cupriavidus necator (strain ATCC 17699 / DSM 428 / KCTC 22496 / NCIMB 10442 / H16 / Stanier 337) (Ralstonia eutropha).